The following is a 348-amino-acid chain: F-box protein At2g20380 (348 aa).

Positions 14 to 60 constitute an F-box domain; the sequence is SPESNSLPNDLIVTILARLSQSYYPKLSLVSKTFRAILASPELYQTR.

The polypeptide is F-box protein At2g20380 (Arabidopsis thaliana (Mouse-ear cress)).